Reading from the N-terminus, the 322-residue chain is Agmatinase (322 aa).

Mn(2+) contacts are provided by H136, D160, H162, D164, D243, and D245.

This sequence belongs to the arginase family. Agmatinase subfamily. It depends on Mn(2+) as a cofactor.

The enzyme catalyses agmatine + H2O = urea + putrescine. The protein operates within amine and polyamine biosynthesis; putrescine biosynthesis via agmatine pathway; putrescine from agmatine: step 1/1. Catalyzes the formation of putrescine from agmatine. The protein is Agmatinase of Chromobacterium violaceum (strain ATCC 12472 / DSM 30191 / JCM 1249 / CCUG 213 / NBRC 12614 / NCIMB 9131 / NCTC 9757 / MK).